The primary structure comprises 96 residues: (4S)-4-hydroxy-5-phosphonooxypentane-2,3-dione isomerase (96 aa).

An ABM domain is found at 2–91 (HVTLVEINVH…MTGPRTKKVF (90 aa)).

This sequence belongs to the LsrG family. Homodimer.

The protein localises to the cytoplasm. The enzyme catalyses (2S)-2-hydroxy-3,4-dioxopentyl phosphate = 3-hydroxy-2,4-dioxopentyl phosphate. Involved in the degradation of phospho-AI-2, thereby terminating induction of the lsr operon and closing the AI-2 signaling cycle. Catalyzes the conversion of (4S)-4-hydroxy-5-phosphonooxypentane-2,3-dione (P-DPD) to 3-hydroxy-5-phosphonooxypentane-2,4-dione (P-HPD). The chain is (4S)-4-hydroxy-5-phosphonooxypentane-2,3-dione isomerase from Salmonella choleraesuis (strain SC-B67).